Consider the following 107-residue polypeptide: Late embryogenesis abundant protein M10 (107 aa).

Residues 1-19 (MGNLMSLVLVALLFSLSLA) form the signal peptide.

Its function is as follows. May be involved in the acquisition of desiccation tolerance during late phase of embryogenesis. In Arabidopsis thaliana (Mouse-ear cress), this protein is Late embryogenesis abundant protein M10.